A 266-amino-acid chain; its full sequence is Indole-3-glycerol phosphate synthase (266 aa).

The protein belongs to the TrpC family.

The enzyme catalyses 1-(2-carboxyphenylamino)-1-deoxy-D-ribulose 5-phosphate + H(+) = (1S,2R)-1-C-(indol-3-yl)glycerol 3-phosphate + CO2 + H2O. It participates in amino-acid biosynthesis; L-tryptophan biosynthesis; L-tryptophan from chorismate: step 4/5. This chain is Indole-3-glycerol phosphate synthase, found in Acidovorax sp. (strain JS42).